The primary structure comprises 357 residues: NADH-quinone oxidoreductase subunit H (357 aa).

A run of 8 helical transmembrane segments spans residues Trp20–Val40, Ala92–Ile112, Leu127–Ala147, Ile165–Leu185, Gly203–Ile223, Phe259–Leu279, Ile294–Phe314, and Leu329–Met349.

It belongs to the complex I subunit 1 family. In terms of assembly, NDH-1 is composed of 14 different subunits. Subunits NuoA, H, J, K, L, M, N constitute the membrane sector of the complex.

Its subcellular location is the cell inner membrane. It carries out the reaction a quinone + NADH + 5 H(+)(in) = a quinol + NAD(+) + 4 H(+)(out). Functionally, NDH-1 shuttles electrons from NADH, via FMN and iron-sulfur (Fe-S) centers, to quinones in the respiratory chain. The immediate electron acceptor for the enzyme in this species is believed to be ubiquinone. Couples the redox reaction to proton translocation (for every two electrons transferred, four hydrogen ions are translocated across the cytoplasmic membrane), and thus conserves the redox energy in a proton gradient. This subunit may bind ubiquinone. This chain is NADH-quinone oxidoreductase subunit H, found in Herminiimonas arsenicoxydans.